A 177-amino-acid chain; its full sequence is MRFYNRYNSSLKNYLLCSINSFNTNTLKIPLKPTLSAVFNTFRGERSLKFIKLYLMILYISNQKPFIKKVKFSYIKKKILKRFFISVSLNKKNSFNFFMYMLNFYNYFFHIYYQKCLKYNRFENSLILYIDNIQFFFKNYNKQNQKTQIKCQLNLRNSQASILFKYLNNMFLIKVKN.

Belongs to the universal ribosomal protein uL5 family.

It localises to the mitochondrion. This chain is Large ribosomal subunit protein uL5m (RPL5), found in Acanthamoeba castellanii (Amoeba).